Reading from the N-terminus, the 555-residue chain is Urocanate hydratase (555 aa).

NAD(+)-binding positions include 51–52, Q129, 175–177, E195, 241–242, 262–266, 272–273, and Y321; these read GG, GMG, NA, QTSAH, and YL. Residue C409 is part of the active site. G491 contacts NAD(+).

The protein belongs to the urocanase family. NAD(+) is required as a cofactor.

Its subcellular location is the cytoplasm. It catalyses the reaction 4-imidazolone-5-propanoate = trans-urocanate + H2O. Its pathway is amino-acid degradation; L-histidine degradation into L-glutamate; N-formimidoyl-L-glutamate from L-histidine: step 2/3. Its function is as follows. Catalyzes the conversion of urocanate to 4-imidazolone-5-propionate. The sequence is that of Urocanate hydratase from Hyphomonas neptunium (strain ATCC 15444).